A 190-amino-acid polypeptide reads, in one-letter code: Holliday junction branch migration complex subunit RuvA (190 aa).

Residues 1-65 (MIGTLSGTVE…DGVSQLYGFA (65 aa)) form a domain I region. The domain II stretch occupies residues 66-137 (NREEQNCMRM…LTPQVQKFEL (72 aa)). The segment at 137-141 (LNRFA) is flexible linker. Positions 142 to 190 (ATTRTDSEAVAALLSLGYERTAALGALQKVGVCDSTEDAVRRALLELSK) are domain III.

Belongs to the RuvA family. As to quaternary structure, homotetramer. Forms an RuvA(8)-RuvB(12)-Holliday junction (HJ) complex. HJ DNA is sandwiched between 2 RuvA tetramers; dsDNA enters through RuvA and exits via RuvB. An RuvB hexamer assembles on each DNA strand where it exits the tetramer. Each RuvB hexamer is contacted by two RuvA subunits (via domain III) on 2 adjacent RuvB subunits; this complex drives branch migration. In the full resolvosome a probable DNA-RuvA(4)-RuvB(12)-RuvC(2) complex forms which resolves the HJ.

The protein localises to the cytoplasm. Its function is as follows. The RuvA-RuvB-RuvC complex processes Holliday junction (HJ) DNA during genetic recombination and DNA repair, while the RuvA-RuvB complex plays an important role in the rescue of blocked DNA replication forks via replication fork reversal (RFR). RuvA specifically binds to HJ cruciform DNA, conferring on it an open structure. The RuvB hexamer acts as an ATP-dependent pump, pulling dsDNA into and through the RuvAB complex. HJ branch migration allows RuvC to scan DNA until it finds its consensus sequence, where it cleaves and resolves the cruciform DNA. This chain is Holliday junction branch migration complex subunit RuvA, found in Anaplasma marginale (strain Florida).